Consider the following 551-residue polypeptide: Interleukin-2 receptor subunit beta (551 aa).

Positions 1-26 (MATLALSWCLPLLILLLPLATSSASA) are cleaved as a signal peptide. The Extracellular segment spans residues 27–240 (AVNGTSRFTC…TKPAALGKDT (214 aa)). Residues Asn29, Asn43, and Asn71 are each glycosylated (N-linked (GlcNAc...) asparagine). A disulfide bond links Cys36 and Cys46. A disulfide bond links Cys74 and Cys86. The Fibronectin type-III domain occupies 134-234 (APISLQVVHV…QPLAFRTKPA (101 aa)). Asn149 is a glycosylation site (N-linked (GlcNAc...) asparagine). Positions 220–224 (WSPWS) match the WSXWS motif motif. A helical membrane pass occupies residues 241–265 (IPWLGHLLVGLSGAFGFIILVYLLI). The Cytoplasmic portion of the chain corresponds to 266 to 551 (NCRNTGPWLK…LQDQDPTHLV (286 aa)). Residues 278–286 (LKCHTPDPS) carry the Box 1 motif motif. Disordered stretches follow at residues 389–417 (EEEPDEGGADAPTGSSPQPLRPLSAEDDA), 430–484 (FSPS…DLVD), and 496–517 (AGEQVPDPGPREPFSFPWARPP).

It belongs to the type I cytokine receptor family. Type 4 subfamily. In terms of assembly, non-covalent dimer of an alpha and a beta subunit. IL2R exists in 3 different forms: a high affinity dimer, an intermediate affinity monomer (beta subunit), and a low affinity monomer (alpha subunit). The high and intermediate affinity forms also associate with a gamma subunit. Interacts with SHB upon interleukin stimulation.

It localises to the cell membrane. Its subcellular location is the cell surface. Its function is as follows. Receptor for interleukin-2. This beta subunit is involved in receptor mediated endocytosis and transduces the mitogenic signals of IL2. Probably in association with IL15RA, involved in the stimulation of neutrophil phagocytosis by IL15. The polypeptide is Interleukin-2 receptor subunit beta (IL2RB) (Macaca fascicularis (Crab-eating macaque)).